Reading from the N-terminus, the 341-residue chain is Glycerol-3-phosphate dehydrogenase [NAD(P)+] (341 aa).

4 residues coordinate NADPH: S14, F15, R35, and K108. The sn-glycerol 3-phosphate site is built by K108 and G136. A140 serves as a coordination point for NADPH. Positions 191, 244, 254, 255, and 256 each coordinate sn-glycerol 3-phosphate. K191 functions as the Proton acceptor in the catalytic mechanism. R255 contributes to the NADPH binding site. NADPH is bound by residues V279 and E281.

The protein belongs to the NAD-dependent glycerol-3-phosphate dehydrogenase family.

Its subcellular location is the cytoplasm. It catalyses the reaction sn-glycerol 3-phosphate + NAD(+) = dihydroxyacetone phosphate + NADH + H(+). It carries out the reaction sn-glycerol 3-phosphate + NADP(+) = dihydroxyacetone phosphate + NADPH + H(+). Its pathway is membrane lipid metabolism; glycerophospholipid metabolism. Catalyzes the reduction of the glycolytic intermediate dihydroxyacetone phosphate (DHAP) to sn-glycerol 3-phosphate (G3P), the key precursor for phospholipid synthesis. In Pseudomonas savastanoi pv. phaseolicola (strain 1448A / Race 6) (Pseudomonas syringae pv. phaseolicola (strain 1448A / Race 6)), this protein is Glycerol-3-phosphate dehydrogenase [NAD(P)+].